Here is a 980-residue protein sequence, read N- to C-terminus: Thrombospondin-4 (980 aa).

The N-terminal stretch at 1-42 is a signal peptide; it reads MTMITPSSKLTLTKGNKSWSSTRCGAFLLLHLVLQPWQRAGA. The 168-residue stretch at 43 to 210 folds into the Laminin G-like domain; that stretch reads QATPQVFDLL…LEELKLVVRG (168 aa). The region spanning 304 to 343 is the EGF-like 1 domain; it reads PTRRCDSSPCFRGVRCTDTRDGFQCGPCPDGYTGNGITCS. Disulfide bonds link Cys-308–Cys-319, Cys-313–Cys-328, Cys-331–Cys-342, Cys-348–Cys-359, Cys-353–Cys-368, Cys-371–Cys-395, Cys-401–Cys-412, Cys-406–Cys-421, Cys-424–Cys-436, Cys-442–Cys-456, Cys-450–Cys-466, Cys-468–Cys-480, Cys-496–Cys-501, Cys-506–Cys-526, Cys-542–Cys-562, Cys-565–Cys-585, Cys-601–Cys-621, Cys-624–Cys-644, Cys-662–Cys-682, Cys-702–Cys-722, and Cys-738–Cys-959. In terms of domain architecture, EGF-like 2; calcium-binding spans 344–381; the sequence is DVDECKYHPCYPGVRCTNLAPGFRCDACPVGFTGPMVQ. An EGF-like 3; calcium-binding domain is found at 397 to 434; that stretch reads DVDECRNGACVLNSICINTLGSYRCGPCKPGYTGDQTR. Positions 438 to 481 constitute an EGF-like 4 domain; that stretch reads TERSCRNPEQNPCSVHAQCIEERQGDVTCVCGVGWAGRAGYVCG. 8 TSP type-3 repeats span residues 482–514, 515–550, 551–573, 574–609, 610–632, 633–670, 671–710, and 711–746; these read KDVDIDSYPDEELPCSARNCKKDNCKYVPNSGQ, EDADRDGIGDACDEDADGDGILNEQDNCVLTHNVDQ, RNTDKDIFGDACDNCRGVLNNDQ, KDTDGDGKGDACDDDMDGDGIKNILDNCPRVPNRDQ, QDRDGDGVGDACDSCPDVSNPNQ, SDVDNDLVGDSCDTNQDSDGDGHQDSTDNCPTVINSAQ, LDTDKDGIGDECDDDDDNDGMPDLFPPGPDNCRLVPNPAQ, and EDSNNDGVGDICEADFDQDKVIDRIDVCPENAEITL. Residues 596–691 form a disordered region; that stretch reads NILDNCPRVP…CDDDDDNDGM (96 aa). The span at 605 to 615 shows a compositional bias: basic and acidic residues; it reads PNRDQQDRDGD. N-linked (GlcNAc...) asparagine glycosylation occurs at Asn-631. Over residues 659–671 the composition is skewed to polar residues; it reads TDNCPTVINSAQL. Over residues 679 to 690 the composition is skewed to acidic residues; sequence GDECDDDDDNDG. One can recognise a TSP C-terminal domain in the interval 750–964; sequence RAYQTVVLDP…LKYRCNDTIP (215 aa). Residue Asn-960 is glycosylated (N-linked (GlcNAc...) asparagine).

It belongs to the thrombospondin family. As to quaternary structure, homopentamer; disulfide-linked. Interacts with PTBP3. Interacts (via EGF-like 3; calcium-binding domain) with ATF6 and facilitates its processing, activation and nuclear translocation. Interacts with NOTCH1. In terms of tissue distribution, mainly expressed in astrocytes, and in ressponse to peripheral nerve injury, significantly up-regulated in the dorsal spinal cord (at protein level).

The protein resides in the endoplasmic reticulum. The protein localises to the sarcoplasmic reticulum. It is found in the secreted. It localises to the extracellular space. Its subcellular location is the extracellular matrix. Its function is as follows. Adhesive glycoprotein that mediates cell-to-cell and cell-to-matrix interactions and is involved in various processes including cellular proliferation, migration, adhesion and attachment, inflammatory response to CNS injury, regulation of vascular inflammation and adaptive responses of the heart to pressure overload and in myocardial function and remodeling. Binds to structural extracellular matrix (ECM) proteins and modulates the ECM in response to tissue damage, contributing to cardioprotective and adaptive ECM remodeling. Plays a role in ER stress response, via its interaction with the activating transcription factor 6 alpha (ATF6) which produces adaptive ER stress response factors and protects myocardium from pressure overload. May contribute to spinal presynaptic hypersensitivity and neuropathic pain states after peripheral nerve injury. May play a role in regulating protective astrogenesis from the subventricular zone (SVZ) niche after injury in a NOTCH1-dependent manner. The chain is Thrombospondin-4 (Thbs4) from Rattus norvegicus (Rat).